We begin with the raw amino-acid sequence, 112 residues long: UPF0102 protein JJD26997_0163 (112 aa).

It belongs to the UPF0102 family.

This is UPF0102 protein JJD26997_0163 from Campylobacter jejuni subsp. doylei (strain ATCC BAA-1458 / RM4099 / 269.97).